The chain runs to 99 residues: NADH-quinone oxidoreductase subunit K (99 aa).

Helical transmembrane passes span 3–23 (PDNY…GVML), 28–48 (IVVF…FVTF), and 59–79 (VIAF…LGII).

It belongs to the complex I subunit 4L family. As to quaternary structure, NDH-1 is composed of 14 different subunits. Subunits NuoA, H, J, K, L, M, N constitute the membrane sector of the complex.

It is found in the cell membrane. The enzyme catalyses a quinone + NADH + 5 H(+)(in) = a quinol + NAD(+) + 4 H(+)(out). In terms of biological role, NDH-1 shuttles electrons from NADH, via FMN and iron-sulfur (Fe-S) centers, to quinones in the respiratory chain. The immediate electron acceptor for the enzyme in this species is believed to be a menaquinone. Couples the redox reaction to proton translocation (for every two electrons transferred, four hydrogen ions are translocated across the cytoplasmic membrane), and thus conserves the redox energy in a proton gradient. This chain is NADH-quinone oxidoreductase subunit K, found in Mycobacteroides abscessus (strain ATCC 19977 / DSM 44196 / CCUG 20993 / CIP 104536 / JCM 13569 / NCTC 13031 / TMC 1543 / L948) (Mycobacterium abscessus).